Consider the following 264-residue polypeptide: MLELRLVQGSLLKKVMDSIKDLVNDANFDCSATGFSLQAMDSSHVALVAVLLRSEGFEHYRCDRNISMGMNLGNMAKMLKCAGNDDIITIKADDGSDTVTFMFESPTQDKIADFEMKLMDIDSEHLGIPEAEYHAIVRMPSAEFARICKDLSSIGDTVVISVTKEGVKFSTRGDIGTANIVCRQNTTVDKPEEATVIEMNEPVSLTFALRYMNSFTKASPLSSTVTISLSSELPVVVEYKIAEMGYIRFYLAPKIEEEEDESKP.

The DNA-binding element occupies 61-80 (RCDRNISMGMNLGNMAKMLK).

This sequence belongs to the PCNA family.

Its subcellular location is the nucleus. This protein is an auxiliary protein of DNA polymerase delta and is involved in the control of eukaryotic DNA replication by increasing the polymerase's processibility during elongation of the leading strand. In Daucus carota (Wild carrot), this protein is Proliferating cell nuclear antigen.